The chain runs to 249 residues: tRNA (guanine-N(1)-)-methyltransferase (249 aa).

S-adenosyl-L-methionine is bound by residues glycine 112 and 132–137; that span reads LGDFVL.

It belongs to the RNA methyltransferase TrmD family. Homodimer.

The protein localises to the cytoplasm. It catalyses the reaction guanosine(37) in tRNA + S-adenosyl-L-methionine = N(1)-methylguanosine(37) in tRNA + S-adenosyl-L-homocysteine + H(+). Its function is as follows. Specifically methylates guanosine-37 in various tRNAs. In Citrifermentans bemidjiense (strain ATCC BAA-1014 / DSM 16622 / JCM 12645 / Bem) (Geobacter bemidjiensis), this protein is tRNA (guanine-N(1)-)-methyltransferase.